The primary structure comprises 275 residues: Large ribosomal subunit protein uL2 (275 aa).

Over residues 38-53 (SSKAGRNNNGRITTRH) the composition is skewed to polar residues. Disordered stretches follow at residues 38–59 (SSKAGRNNNGRITTRHQGGGHK) and 224–257 (AMNPIDHPHGGGEGRTAAGRDPVSPWGTPTKGFR).

It belongs to the universal ribosomal protein uL2 family. In terms of assembly, part of the 50S ribosomal subunit. Forms a bridge to the 30S subunit in the 70S ribosome.

Functionally, one of the primary rRNA binding proteins. Required for association of the 30S and 50S subunits to form the 70S ribosome, for tRNA binding and peptide bond formation. It has been suggested to have peptidyltransferase activity; this is somewhat controversial. Makes several contacts with the 16S rRNA in the 70S ribosome. In Burkholderia multivorans (strain ATCC 17616 / 249), this protein is Large ribosomal subunit protein uL2.